The following is a 461-amino-acid chain: Peptidyl-prolyl cis-trans isomerase-like 4 (461 aa).

Positions 1 to 171 constitute a PPIase cyclophilin-type domain; that stretch reads MSVLLETSLG…KDIRIRHTVI (171 aa). The stretch at 205–234 forms a coiled coil; it reads EELDDNMDEESMEKLRREREARAQALTLEM. An RRM domain is found at 248-326; the sequence is NVLFVCKLNP…HRIHVDFSQS (79 aa). The tract at residues 341–461 is disordered; that stretch reads KRSGQRGGFG…DERYRERRRR (121 aa). 2 stretches are compositionally biased toward basic and acidic residues: residues 365-384 and 398-461; these read DNAR…GDKA and SNRD…RRRR.

Belongs to the cyclophilin-type PPIase family. PPIL4 subfamily.

The protein localises to the nucleus. The catalysed reaction is [protein]-peptidylproline (omega=180) = [protein]-peptidylproline (omega=0). In terms of biological role, PPIases accelerate the folding of proteins. It catalyzes the cis-trans isomerization of proline imidic peptide bonds in oligopeptides. This is Peptidyl-prolyl cis-trans isomerase-like 4 (cyp6) from Aspergillus oryzae (strain ATCC 42149 / RIB 40) (Yellow koji mold).